The primary structure comprises 33 residues: Dolabellanin-B2 (33 aa).

In terms of processing, contains two disulfide bonds. Up to two of the methionines may be oxidized to methionine sulfoxides.

It localises to the secreted. Its function is as follows. Has antibacterial activity against Gram-negative bacteria E.coli JM109 and DH5-alpha, H.influenza IID 983, and V.vulnificus RIMD 2219009. Has antibacterial activity against Gram-positive bacteria S.aureus IID 1677, B.subtilis RIMD 0225014 and L.monocytogenes VIU206. Possesses antifungal activity against S.cerevisiae A581A, S.pombe IFO 1628, C.albicans ATCC 36232 and TIMM-1623, and C.tropicalis TIMM-0313. In Dolabella auricularia (Shoulderblade sea cat), this protein is Dolabellanin-B2.